A 44-amino-acid chain; its full sequence is Cuticle protein CP459 (44 aa).

2 consecutive repeat copies span residues 3–20 (LLKG…KRLL) and 27–44 (VLLT…NVQF).

Calcified shell.

This is Cuticle protein CP459 from Cancer pagurus (Rock crab).